The following is a 182-amino-acid chain: Probable chorismate pyruvate-lyase (182 aa).

Arg-81, Leu-119, and Glu-171 together coordinate substrate.

It belongs to the UbiC family.

It localises to the cytoplasm. It catalyses the reaction chorismate = 4-hydroxybenzoate + pyruvate. It participates in cofactor biosynthesis; ubiquinone biosynthesis. Its function is as follows. Removes the pyruvyl group from chorismate, with concomitant aromatization of the ring, to provide 4-hydroxybenzoate (4HB) for the ubiquinone pathway. The sequence is that of Probable chorismate pyruvate-lyase from Pseudomonas putida (Arthrobacter siderocapsulatus).